Here is a 606-residue protein sequence, read N- to C-terminus: Threonine dehydratase 1 biosynthetic, chloroplastic (606 aa).

An N6-(pyridoxal phosphate)lysine modification is found at lysine 154. ACT-like domains follow at residues 432–504 (AVLA…NLTD) and 526–597 (LLCR…MESL).

Belongs to the serine/threonine dehydratase family. It depends on pyridoxal 5'-phosphate as a cofactor. As to expression, expressed constitutively in all tissues examined including root, stem, petiole, leaf, immature flower bud, unopened flower and opened flower with the highest expression in opened flower and lowest in leaf.

It localises to the plastid. The protein resides in the chloroplast. It carries out the reaction L-threonine = 2-oxobutanoate + NH4(+). Its pathway is amino-acid biosynthesis; L-isoleucine biosynthesis; 2-oxobutanoate from L-threonine: step 1/1. Strongly inhibited by 1 mM isoleucine. In terms of biological role, has a housekeeping role in isoleucine biosynthesis. This is Threonine dehydratase 1 biosynthetic, chloroplastic from Solanum lycopersicum (Tomato).